A 291-amino-acid chain; its full sequence is Lipoyl synthase, mitochondrial (291 aa).

The [4Fe-4S] cluster site is built by C45, C50, C56, C71, C75, C78, and S283. The 216-residue stretch at 57–272 folds into the Radical SAM core domain; sequence WGEGTATFMI…EKIGKELGFR (216 aa).

It belongs to the radical SAM superfamily. Lipoyl synthase family. It depends on [4Fe-4S] cluster as a cofactor.

It localises to the mitochondrion. The enzyme catalyses [[Fe-S] cluster scaffold protein carrying a second [4Fe-4S](2+) cluster] + N(6)-octanoyl-L-lysyl-[protein] + 2 oxidized [2Fe-2S]-[ferredoxin] + 2 S-adenosyl-L-methionine + 4 H(+) = [[Fe-S] cluster scaffold protein] + N(6)-[(R)-dihydrolipoyl]-L-lysyl-[protein] + 4 Fe(3+) + 2 hydrogen sulfide + 2 5'-deoxyadenosine + 2 L-methionine + 2 reduced [2Fe-2S]-[ferredoxin]. It participates in protein modification; protein lipoylation via endogenous pathway; protein N(6)-(lipoyl)lysine from octanoyl-[acyl-carrier-protein]: step 2/2. In terms of biological role, catalyzes the radical-mediated insertion of two sulfur atoms into the C-6 and C-8 positions of the octanoyl moiety bound to the lipoyl domains of lipoate-dependent enzymes, thereby converting the octanoylated domains into lipoylated derivatives. This Nematostella vectensis (Starlet sea anemone) protein is Lipoyl synthase, mitochondrial.